The chain runs to 700 residues: Polyphosphate kinase (700 aa).

N45 contacts ATP. Mg(2+)-binding residues include R373 and R403. A PLD phosphodiesterase 1 domain is found at 428–462 (PGMKIHAKLLLITRREEQGFVRYAHIGTGNFHERT). Residue H433 is the Phosphohistidine intermediate of the active site. ATP is bound by residues Y466, R562, and H590. The PLD phosphodiesterase 2 domain maps to 585–615 (DRFLEHPRVLVVHNDGDPQVFISSADWMERN).

Belongs to the polyphosphate kinase 1 (PPK1) family. Mg(2+) is required as a cofactor. Post-translationally, an intermediate of this reaction is the autophosphorylated ppk in which a phosphate is covalently linked to a histidine residue through a N-P bond.

It catalyses the reaction [phosphate](n) + ATP = [phosphate](n+1) + ADP. Functionally, catalyzes the reversible transfer of the terminal phosphate of ATP to form a long-chain polyphosphate (polyP). The polypeptide is Polyphosphate kinase (Vibrio vulnificus (strain YJ016)).